Reading from the N-terminus, the 509-residue chain is Dihydrolipoyl dehydrogenase, mitochondrial (509 aa).

A mitochondrion-targeting transit peptide spans methionine 1–tyrosine 35. Position 66 is an N6-acetyllysine; alternate (lysine 66). N6-succinyllysine; alternate is present on lysine 66. Residues glutamate 71–cysteine 80 and lysine 89 each bind FAD. A disulfide bridge links cysteine 80 with cysteine 85. N6-acetyllysine; alternate is present on residues lysine 104, lysine 122, lysine 132, and lysine 143. 4 positions are modified to N6-succinyllysine; alternate: lysine 104, lysine 122, lysine 132, and lysine 143. Glycine 154 contacts FAD. Lysine 159 carries the N6-succinyllysine modification. Threonine 183–serine 185 lines the FAD pocket. NAD(+) contacts are provided by residues glycine 220–glutamate 227 and glutamate 243. N6-succinyllysine is present on residues lysine 273 and lysine 277. Valine 278 serves as a coordination point for NAD(+). 2 positions are modified to phosphoserine: serine 285 and serine 297. Glycine 314 contributes to the NAD(+) binding site. Lysine 346 is subject to N6-acetyllysine. FAD contacts are provided by residues aspartate 355 and methionine 361–histidine 364. The residue at position 410 (lysine 410) is an N6-acetyllysine; alternate. Lysine 410 is subject to N6-succinyllysine; alternate. 2 positions are modified to N6-acetyllysine: lysine 417 and lysine 420. Lysine 430 is modified (N6-succinyllysine). Histidine 487 serves as the catalytic Proton acceptor. At serine 502 the chain carries Phosphoserine. The residue at position 505 (lysine 505) is an N6-acetyllysine; alternate. At lysine 505 the chain carries N6-succinyllysine; alternate.

The protein belongs to the class-I pyridine nucleotide-disulfide oxidoreductase family. Homodimer. Part of the multimeric pyruvate dehydrogenase complex that contains multiple copies of pyruvate dehydrogenase (subunits PDHA (PDHA1 or PDHA2) and PDHB, E1), dihydrolipoamide acetyltransferase (DLAT, E2) and lipoamide dehydrogenase (DLD, E3). These subunits are bound to an inner core composed of about 48 DLAT and 12 PDHX molecules (by non covalent bonds). The 2-oxoglutarate dehydrogenase complex is composed of OGDH (2-oxoglutarate dehydrogenase; E1), DLST (dihydrolipoamide succinyltransferase; E2), DLD (dihydrolipoamide dehydrogenase; E3) and the assembly factor KGD4. It contains multiple copies of the three enzymatic components (E1, E2 and E3). In the nucleus, the 2-oxoglutarate dehydrogenase complex associates with KAT2A. Interacts with PDHX. The cofactor is FAD. In terms of processing, tyrosine phosphorylated.

It is found in the mitochondrion matrix. Its subcellular location is the nucleus. The protein resides in the cell projection. The protein localises to the cilium. It localises to the flagellum. It is found in the cytoplasmic vesicle. Its subcellular location is the secretory vesicle. The protein resides in the acrosome. The enzyme catalyses N(6)-[(R)-dihydrolipoyl]-L-lysyl-[protein] + NAD(+) = N(6)-[(R)-lipoyl]-L-lysyl-[protein] + NADH + H(+). Lipoamide dehydrogenase is a component of the glycine cleavage system as well as an E3 component of three alpha-ketoacid dehydrogenase complexes (pyruvate-, alpha-ketoglutarate-, and branched-chain amino acid-dehydrogenase complex). The 2-oxoglutarate dehydrogenase complex is mainly active in the mitochondrion. A fraction of the 2-oxoglutarate dehydrogenase complex also localizes in the nucleus and is required for lysine succinylation of histones: associates with KAT2A on chromatin and provides succinyl-CoA to histone succinyltransferase KAT2A. In monomeric form may have additional moonlighting function as serine protease. Involved in the hyperactivation of spermatazoa during capacitation and in the spermatazoal acrosome reaction. The protein is Dihydrolipoyl dehydrogenase, mitochondrial (Dld) of Rattus norvegicus (Rat).